A 632-amino-acid chain; its full sequence is Probable potassium transport system protein Kup 1 (632 aa).

12 helical membrane passes run 17–37, 60–80, 106–126, 144–164, 175–195, 210–230, 254–274, 292–312, 344–364, 370–390, 401–421, and 426–446; these read LFYL…TSPL, LISL…VLFL, TALL…DAMI, PSLA…LFVV, FFGP…ISHI, AVSF…AVFL, WFLL…ALVL, ALLP…QAVI, IFLP…VLSF, LATA…IMAF, LPVA…FLGA, and IHDG…VMWT.

The protein belongs to the HAK/KUP transporter (TC 2.A.72) family.

The protein resides in the cell inner membrane. It carries out the reaction K(+)(in) + H(+)(in) = K(+)(out) + H(+)(out). Its function is as follows. Transport of potassium into the cell. Likely operates as a K(+):H(+) symporter. In Rhizobium etli (strain ATCC 51251 / DSM 11541 / JCM 21823 / NBRC 15573 / CFN 42), this protein is Probable potassium transport system protein Kup 1.